The following is a 37-amino-acid chain: Potassium channel toxin alpha-KTx 3.9 (37 aa).

Intrachain disulfides connect Cys-7/Cys-27, Cys-13/Cys-32, and Cys-17/Cys-34. Residues 25-32 form an interaction with Ca(2+)-activated K(+) channels region; sequence GKCMNRKC.

It belongs to the short scorpion toxin superfamily. Potassium channel inhibitor family. Alpha-KTx 03 subfamily. As to expression, expressed by the venom gland.

It localises to the secreted. Binds and inhibits potassium channels. Intracerebroventricular injection into mice induces paralyzing symptoms followed by death. Its binding affinity to rat brain synaptosomes is 5-fold lower than this of KTX 1. The chain is Potassium channel toxin alpha-KTx 3.9 (KTX3) from Buthus occitanus tunetanus (Common European scorpion).